The chain runs to 358 residues: RuBisCO accumulation factor 1 (358 aa).

Positions 11–194 (VSAAEAAELI…RQAIEKLLTD (184 aa)) are N-terminal alpha-helix. A C-terminal beta-sheet region spans residues 218–344 (ARLIPVAGTF…VVLVLRPKKI (127 aa)).

It belongs to the RAF family. Homodimer. Forms an RbcL(8)-Raf1(8) complex. Forms complexes of many stoichiometries with RbcL with and without RbcS. RbcX and Raf1 can bind simultaneously to RbcL. Interacts with both RuBisCO subunits (ccbL, ccbS), GroEL, DnaK and alpha and beta phycocyanin (cpcA, cpcB) in pull-down experiments with tagged protein. C-terminally tagged Raf1 does not interact with either RuBisCO subunit, suggesting its C-terminus is involved in binding.

The protein localises to the cytoplasm. Its function is as follows. A major RuBisCO chaperone. Acts after GroEL-GroES chaperonin to fold and/or assemble the large subunit of RuBisCO (ccbL, rbcL). Cooperates with RbcX in RbcL folding, plays the major role in assembly of dimers into RbcL(8)-Raf1(8) intermediate complexes. RbcS replaces Raf1, leading to holoenzyme formation. Functionally, required for optimal reconstitution of RbcL(8) upon expression in E.coli. Has been suggested to be involved in RuBisCO recycling and homeostasis rather than assembly. This chain is RuBisCO accumulation factor 1, found in Synechocystis sp. (strain ATCC 27184 / PCC 6803 / Kazusa).